Consider the following 545-residue polypeptide: Chaperonin GroEL (545 aa).

ATP-binding positions include 30-33 (TLGP), K51, 87-91 (DGTTT), G415, and D496.

The protein belongs to the chaperonin (HSP60) family. Forms a cylinder of 14 subunits composed of two heptameric rings stacked back-to-back. Interacts with the co-chaperonin GroES.

Its subcellular location is the cytoplasm. The catalysed reaction is ATP + H2O + a folded polypeptide = ADP + phosphate + an unfolded polypeptide.. Together with its co-chaperonin GroES, plays an essential role in assisting protein folding. The GroEL-GroES system forms a nano-cage that allows encapsulation of the non-native substrate proteins and provides a physical environment optimized to promote and accelerate protein folding. The chain is Chaperonin GroEL from Haemophilus influenzae (strain 86-028NP).